The primary structure comprises 229 residues: 7-cyano-7-deazaguanine synthase (229 aa).

An ATP-binding site is contributed by 8-18 (CSGGLDSSVIA). Zn(2+)-binding residues include Cys-190, Cys-203, Cys-206, and Cys-209.

This sequence belongs to the QueC family. Requires Zn(2+) as cofactor.

The enzyme catalyses 7-carboxy-7-deazaguanine + NH4(+) + ATP = 7-cyano-7-deazaguanine + ADP + phosphate + H2O + H(+). It participates in purine metabolism; 7-cyano-7-deazaguanine biosynthesis. Functionally, catalyzes the ATP-dependent conversion of 7-carboxy-7-deazaguanine (CDG) to 7-cyano-7-deazaguanine (preQ(0)). The sequence is that of 7-cyano-7-deazaguanine synthase from Methanopyrus kandleri (strain AV19 / DSM 6324 / JCM 9639 / NBRC 100938).